The primary structure comprises 466 residues: Uronate isomerase (466 aa).

The protein belongs to the metallo-dependent hydrolases superfamily. Uronate isomerase family.

It catalyses the reaction D-glucuronate = D-fructuronate. The catalysed reaction is aldehydo-D-galacturonate = keto-D-tagaturonate. It participates in carbohydrate metabolism; pentose and glucuronate interconversion. The polypeptide is Uronate isomerase (Brucella canis (strain ATCC 23365 / NCTC 10854 / RM-666)).